The primary structure comprises 757 residues: Elongation factor G, mitochondrial (757 aa).

The N-terminal 39 residues, 1–39 (MLLVPRVPVVMQGKCGLLKISRPLQGSLSRGFHFSRAHR), are a transit peptide targeting the mitochondrion. One can recognise a tr-type G domain in the interval 65–346 (QKLRNIGISA…AIVDYLPNPS (282 aa)). Residues 74 to 81 (AHIDSGKT), 145 to 149 (DTPGH), and 199 to 202 (NKMD) contribute to the GTP site.

The protein belongs to the TRAFAC class translation factor GTPase superfamily. Classic translation factor GTPase family. EF-G/EF-2 subfamily.

The protein resides in the mitochondrion. Its pathway is protein biosynthesis; polypeptide chain elongation. Mitochondrial GTPase that catalyzes the GTP-dependent ribosomal translocation step during translation elongation. During this step, the ribosome changes from the pre-translocational (PRE) to the post-translocational (POST) state as the newly formed A-site-bound peptidyl-tRNA and P-site-bound deacylated tRNA move to the P and E sites, respectively. Catalyzes the coordinated movement of the two tRNA molecules, the mRNA and conformational changes in the ribosome. The sequence is that of Elongation factor G, mitochondrial from Candida glabrata (strain ATCC 2001 / BCRC 20586 / JCM 3761 / NBRC 0622 / NRRL Y-65 / CBS 138) (Yeast).